Reading from the N-terminus, the 246-residue chain is UDP-2,3-diacylglucosamine hydrolase (246 aa).

5 residues coordinate Mn(2+): aspartate 8, histidine 10, aspartate 41, asparagine 79, and histidine 114. 79–80 is a binding site for substrate; that stretch reads NR. Substrate-binding residues include aspartate 122, serine 160, asparagine 164, lysine 167, and histidine 195. The Mn(2+) site is built by histidine 195 and histidine 197.

The protein belongs to the LpxH family. The cofactor is Mn(2+).

The protein localises to the cell inner membrane. The catalysed reaction is UDP-2-N,3-O-bis[(3R)-3-hydroxytetradecanoyl]-alpha-D-glucosamine + H2O = 2-N,3-O-bis[(3R)-3-hydroxytetradecanoyl]-alpha-D-glucosaminyl 1-phosphate + UMP + 2 H(+). The protein operates within glycolipid biosynthesis; lipid IV(A) biosynthesis; lipid IV(A) from (3R)-3-hydroxytetradecanoyl-[acyl-carrier-protein] and UDP-N-acetyl-alpha-D-glucosamine: step 4/6. In terms of biological role, hydrolyzes the pyrophosphate bond of UDP-2,3-diacylglucosamine to yield 2,3-diacylglucosamine 1-phosphate (lipid X) and UMP by catalyzing the attack of water at the alpha-P atom. Involved in the biosynthesis of lipid A, a phosphorylated glycolipid that anchors the lipopolysaccharide to the outer membrane of the cell. This Chromohalobacter salexigens (strain ATCC BAA-138 / DSM 3043 / CIP 106854 / NCIMB 13768 / 1H11) protein is UDP-2,3-diacylglucosamine hydrolase.